Consider the following 750-residue polypeptide: MTASLVEDTNNNHESVRRIQLDVAGMLCAACASRVETKLNKIPGVRASVNFATRVATIDAVDVAVDELRQVIEQAGYRATAHAESAVEEIDPDADYARNLLRRLIVAALLFVPLADLSTMFAIVPTNRFPGWGYLLTALAAPIVTWAAWPFHRVALRNARYRAASMETLISAGILAATGWSLSTIFVDKEPRQTHGIWQAILHSDSIYFEVAAGVTVFVLAGRFFEARAKSKAGSALRALAARGAKNVEVLLPNGAELTIPAGELKKQQHFLVRPGETITADGVVIDGTATIDMSAITGEARPVHASPASTVVGGTTVLDGRLVIEATAVGGDTQFAAMVRLVEDAQVQKARVQHLADRIAAVFVPMVFVIAGLAGASWLLAGASPDRAFSVVLGVLVIACPCTLGLATPTAMMVASGRGAQLGIFIKGYRALETINAIDTVVFDKTGTLTLGQLSVSTVTSTGGWCSGEVLALASAVEAASEHSVATAIVAAYADPRPVADFVAFAGCGVSGVVAEHHVKIGKPSWVTRNAPCDVVLESARREGESRGETVVFVSVDGVACGAVAIADTVKDSAADAISALCSRGLHTILLTGDNQAAARAVAAQVGIDTVIADMLPEAKVDVIQRLRDQGHTVAMVGDGINDGPALACADLGLAMGRGTDVAIGAADLILVRDSLGVVPVALDLARATMRTIRINMIWAFGYNVAAIPIASSGLLNPLIAGAAMAFSSFFVVSNSLRLSNFGLSQTSD.

One can recognise an HMA domain in the interval 17–80; the sequence is RRIQLDVAGM…VIEQAGYRAT (64 aa). Residues C28 and C31 each contribute to the a metal cation site. Helical transmembrane passes span 104–124, 129–149, 167–187, 200–220, 360–380, and 389–409; these read LIVA…FAIV, FPGW…WAAW, ETLI…TIFV, AILH…VFVL, IAAV…ASWL, and AFSV…GLAT. Catalysis depends on D445, which acts as the 4-aspartylphosphate intermediate. 6 helical membrane passes run 471–491, 500–520, 547–567, 663–683, 693–713, and 715–735; these read VLAL…TAIV, VADF…EHHV, SRGE…AVAI, VAIG…VPVA, TIRI…PIAS, and GLLN…FVVS.

It belongs to the cation transport ATPase (P-type) (TC 3.A.3) family. Type IB subfamily.

It is found in the cell membrane. The catalysed reaction is ATP + H2O = ADP + phosphate + H(+). This chain is Cation-transporting P-type ATPase B (ctpB), found in Mycobacterium leprae (strain TN).